We begin with the raw amino-acid sequence, 143 residues long: MKLNTKYHGCIEYEEKDVIYFQKGIPGFEELNKFIIFPVEDNEVFLVFHSIENEDIGIIVTSPFNIENNYEIQLEEEQITNLKLQDEKDALVLNTVTLDSDIDKITVNLRAPIIINIKEKIGEQIIINSDKYKVKHSLFKEEA.

Belongs to the FliW family. Interacts with translational regulator CsrA and flagellin(s).

The protein localises to the cytoplasm. In terms of biological role, acts as an anti-CsrA protein, binds CsrA and prevents it from repressing translation of its target genes, one of which is flagellin. Binds to flagellin and participates in the assembly of the flagellum. This is Flagellar assembly factor FliW from Clostridium botulinum (strain ATCC 19397 / Type A).